We begin with the raw amino-acid sequence, 759 residues long: Fidgetin (759 aa).

Disordered stretches follow at residues 89 to 111 (SNYS…PWQP), 200 to 237 (SQAT…PGYN), 258 to 293 (VGSG…VPGY), and 337 to 429 (SYGQ…VMSE). Pro residues-rich tracts occupy residues 221 to 232 (QPPPPPPPPPAL) and 266 to 289 (GAPP…PPTT). Polar residues-rich tracts occupy residues 337 to 347 (SYGQQRSTQSP) and 382 to 418 (LMPS…SSES). The residue at position 400 (T400) is a Phosphothreonine. Residues A489 and 529–534 (GTGKTL) contribute to the ATP site.

This sequence belongs to the AAA ATPase family. Interacts with AKAP8 (via C-terminus). As to expression, widely expressed.

The protein resides in the nucleus matrix. Its subcellular location is the cytoplasm. The protein localises to the cytoskeleton. It localises to the microtubule organizing center. It is found in the centrosome. ATP-dependent microtubule severing protein. Severs microtubules along their length and depolymerizes their ends, primarily the minus-end, suppressing microtubule growth from and attachment to centrosomes. Microtubule severing may promote rapid reorganization of cellular microtubule arrays and the release of microtubules from the centrosome following nucleation. Microtubule release from the mitotic spindle poles may allow depolymerization of the microtubule end proximal to the spindle pole, leading to poleward microtubule flux and poleward motion of chromosome. The chain is Fidgetin (Fign) from Mus musculus (Mouse).